The following is a 520-amino-acid chain: Hydroxymethylglutaryl-CoA synthase, cytoplasmic (520 aa).

S4 bears the Phosphoserine mark. A (3S)-3-hydroxy-3-methylglutaryl-CoA-binding site is contributed by A44. 44–46 provides a ligand contact to CoA; that stretch reads AGK. K46 is modified (N6-acetyllysine). E95 (proton donor/acceptor) is an active-site residue. 5 residues coordinate (3S)-3-hydroxy-3-methylglutaryl-CoA: C129, N167, T171, S221, and H264. C129 serves as the catalytic Acyl-thioester intermediate. Residue N167 coordinates CoA. Residue S221 coordinates CoA. H264 serves as the catalytic Proton donor/acceptor. Residues K269 and K273 each contribute to the CoA site. Residues K273, N343, and S377 each contribute to the (3S)-3-hydroxy-3-methylglutaryl-CoA site. An N6-acetyllysine modification is found at K273. At T476 the chain carries Phosphothreonine. A disordered region spans residues 492–520; sequence HIPSPAKKVPRLPATAAEPEAAVISNGEH. 2 positions are modified to phosphoserine: S495 and S516.

This sequence belongs to the thiolase-like superfamily. HMG-CoA synthase family. As to quaternary structure, homodimer.

The protein resides in the cytoplasm. It catalyses the reaction acetoacetyl-CoA + acetyl-CoA + H2O = (3S)-3-hydroxy-3-methylglutaryl-CoA + CoA + H(+). It functions in the pathway metabolic intermediate biosynthesis; (R)-mevalonate biosynthesis; (R)-mevalonate from acetyl-CoA: step 2/3. Catalyzes the condensation of acetyl-CoA with acetoacetyl-CoA to form HMG-CoA, which is converted by HMG-CoA reductase (HMGCR) into mevalonate, a precursor for cholesterol synthesis. The chain is Hydroxymethylglutaryl-CoA synthase, cytoplasmic from Pongo abelii (Sumatran orangutan).